A 247-amino-acid polypeptide reads, in one-letter code: Carboxy-S-adenosyl-L-methionine synthase (247 aa).

Residues Tyr-39, Gly-64–Ser-66, Asp-117–Ile-118, Asn-132, and Arg-199 contribute to the S-adenosyl-L-methionine site.

It belongs to the class I-like SAM-binding methyltransferase superfamily. Cx-SAM synthase family. As to quaternary structure, homodimer.

The catalysed reaction is prephenate + S-adenosyl-L-methionine = carboxy-S-adenosyl-L-methionine + 3-phenylpyruvate + H2O. In terms of biological role, catalyzes the conversion of S-adenosyl-L-methionine (SAM) to carboxy-S-adenosyl-L-methionine (Cx-SAM). This is Carboxy-S-adenosyl-L-methionine synthase from Aeromonas salmonicida (strain A449).